We begin with the raw amino-acid sequence, 240 residues long: Manganese transport system ATP-binding protein MntB (240 aa).

The ABC transporter domain occupies 1 to 233 (MNIQGLTIAY…KIQFAYGDAP (233 aa)). An ATP-binding site is contributed by 33–40 (GPNGAGKS).

Belongs to the ABC transporter superfamily.

The protein localises to the cell membrane. This protein is probably a component of a manganese permease, a binding protein-dependent, ATP-driven transport system. Probably responsible for energy coupling to the transport system. This chain is Manganese transport system ATP-binding protein MntB (mntB), found in Listeria innocua serovar 6a (strain ATCC BAA-680 / CLIP 11262).